Consider the following 304-residue polypeptide: N-acetyl-D-glucosamine kinase (304 aa).

ATP-binding positions include 4 to 11 (GFDIGGTK) and 133 to 140 (GFGGGLIF). Positions 157, 178, 180, and 185 each coordinate Zn(2+).

This sequence belongs to the ROK (NagC/XylR) family. NagK subfamily.

It carries out the reaction N-acetyl-D-glucosamine + ATP = N-acetyl-D-glucosamine 6-phosphate + ADP + H(+). It participates in cell wall biogenesis; peptidoglycan recycling. Functionally, catalyzes the phosphorylation of N-acetyl-D-glucosamine (GlcNAc) derived from cell-wall degradation, yielding GlcNAc-6-P. This Pasteurella multocida (strain Pm70) protein is N-acetyl-D-glucosamine kinase.